The chain runs to 103 residues: uncharacterized protein (103 aa).

The segment at 69-103 (SSISYPGGGGGGGGSAKSLSSSKPGGGGGSPLIFL) is disordered. Composition is skewed to gly residues over residues 74–83 (PGGGGGGGGS) and 92–103 (PGGGGGSPLIFL).

This is an uncharacterized protein from Saccharomyces cerevisiae (strain ATCC 204508 / S288c) (Baker's yeast).